A 362-amino-acid polypeptide reads, in one-letter code: Aminomethyltransferase (362 aa).

It belongs to the GcvT family. In terms of assembly, the glycine cleavage system is composed of four proteins: P, T, L and H.

It catalyses the reaction N(6)-[(R)-S(8)-aminomethyldihydrolipoyl]-L-lysyl-[protein] + (6S)-5,6,7,8-tetrahydrofolate = N(6)-[(R)-dihydrolipoyl]-L-lysyl-[protein] + (6R)-5,10-methylene-5,6,7,8-tetrahydrofolate + NH4(+). Its function is as follows. The glycine cleavage system catalyzes the degradation of glycine. This is Aminomethyltransferase from Listeria innocua serovar 6a (strain ATCC BAA-680 / CLIP 11262).